A 190-amino-acid chain; its full sequence is Large ribosomal subunit protein bL25 (190 aa).

The protein belongs to the bacterial ribosomal protein bL25 family. CTC subfamily. As to quaternary structure, part of the 50S ribosomal subunit; part of the 5S rRNA/L5/L18/L25 subcomplex. Contacts the 5S rRNA. Binds to the 5S rRNA independently of L5 and L18.

Functionally, this is one of the proteins that binds to the 5S RNA in the ribosome where it forms part of the central protuberance. This chain is Large ribosomal subunit protein bL25, found in Neisseria meningitidis serogroup A / serotype 4A (strain DSM 15465 / Z2491).